A 379-amino-acid chain; its full sequence is Alcohol dehydrogenase class-3 (379 aa).

Residue Ser-2 is modified to N-acetylserine. Zn(2+)-binding residues include Cys-48, His-70, Cys-100, Cys-103, Cys-106, Cys-114, and Cys-177.

This sequence belongs to the zinc-containing alcohol dehydrogenase family. Class-III subfamily. Requires Zn(2+) as cofactor.

It carries out the reaction a primary alcohol + NAD(+) = an aldehyde + NADH + H(+). The enzyme catalyses a secondary alcohol + NAD(+) = a ketone + NADH + H(+). It catalyses the reaction S-(hydroxymethyl)glutathione + NADP(+) = S-formylglutathione + NADPH + H(+). The catalysed reaction is S-(hydroxymethyl)glutathione + NAD(+) = S-formylglutathione + NADH + H(+). It carries out the reaction octan-1-ol + NAD(+) = octanal + NADH + H(+). Its function is as follows. Class-III ADH is remarkably ineffective in oxidizing ethanol, but it readily catalyzes the oxidation of long-chain primary alcohols and the oxidation of S-(hydroxymethyl) glutathione. This is Alcohol dehydrogenase class-3 (Fdh) from Drosophila melanogaster (Fruit fly).